A 571-amino-acid chain; its full sequence is Isthmin-2 (571 aa).

The first 26 residues, 1–26 (MRALRDRAGLLLCVLLLAALLEAALG), serve as a signal peptide directing secretion. 3 disordered regions span residues 30–60 (KKPR…LKEE), 116–141 (ANTT…LREE), and 257–294 (EKDR…DEEE). A compositionally biased stretch (polar residues) spans 116 to 131 (ANTTLSTPNPDTQASA). Residue N117 is glycosylated (N-linked (GlcNAc...) asparagine). A compositionally biased stretch (basic and acidic residues) spans 257–268 (EKDRAPGEKGEE). A compositionally biased stretch (acidic residues) spans 269-294 (KEEDEDYPSEDIEGEDQEDKEEDEEE). An N-linked (GlcNAc...) asparagine glycan is attached at N300. In terms of domain architecture, TSP type-1 spans 327–371 (EPQKEWSPWSPCSGNCSTGKQQRTRPCGYGCTATETRTCDLPSCP). Cystine bridges form between C338/C365, C342/C370, and C353/C357. N-linked (GlcNAc...) asparagine glycosylation occurs at N392. The AMOP domain occupies 396–559 (MHDQDVDSCE…RACTDNPLEE (164 aa)).

It belongs to the isthmin family. As to expression, expressed at high levels in the placenta and at moderate levels in the pancreas, kidney, heart, liver, lung, brain and skeletal muscle.

It localises to the secreted. The sequence is that of Isthmin-2 (ISM2) from Homo sapiens (Human).